A 399-amino-acid polypeptide reads, in one-letter code: Nitric oxide reductase (399 aa).

Residues 32 to 221 (HRGTTYNAYL…DEIQKINLAI (190 aa)) form a zinc metallo-hydrolase region. Positions 81, 83, 85, 148, 167, and 228 each coordinate Fe cation. The 140-residue stretch at 255–394 (AVIAYDTMWL…RCYELGRKIA (140 aa)) folds into the Flavodoxin-like domain.

In the N-terminal section; belongs to the zinc metallo-hydrolase group 3 family. As to quaternary structure, homodimer. It depends on FMN as a cofactor. Fe cation is required as a cofactor.

Has nitric oxide reductase activity in combination with Hrb; probably involved in nitrosative stress protection. This is Nitric oxide reductase (fprA) from Moorella thermoacetica (strain ATCC 39073 / JCM 9320).